The following is a 262-amino-acid chain: MQVDLQSSAQSAHALHLFHQHSPLVHCMTNDVVQTFTANTLLALGASPAMVIETEEASQFAAIASALLINVGTLTQLRAQSMCAAVEQAKSSQTPWTLDPVAVGALDYRRRFCLELLPHKPTAIRGNASEIMALAGIANGGRGVDTTDAAANAIPAAQTLARETGAIVVVTGEMDYVTDGHRIIGIHGGDPLMTKVVGTGCALSAVVAACCALPGDTLENVASACHWMKQAGERAVARSEGPGSFVPHFLDALWQLTQEVQA.

Residue M50 coordinates substrate. Residues R125 and T171 each contribute to the ATP site. G198 contributes to the substrate binding site.

This sequence belongs to the Thz kinase family. Requires Mg(2+) as cofactor.

It carries out the reaction 5-(2-hydroxyethyl)-4-methylthiazole + ATP = 4-methyl-5-(2-phosphooxyethyl)-thiazole + ADP + H(+). The protein operates within cofactor biosynthesis; thiamine diphosphate biosynthesis; 4-methyl-5-(2-phosphoethyl)-thiazole from 5-(2-hydroxyethyl)-4-methylthiazole: step 1/1. Its function is as follows. Catalyzes the phosphorylation of the hydroxyl group of 4-methyl-5-beta-hydroxyethylthiazole (THZ). This Shigella boydii serotype 4 (strain Sb227) protein is Hydroxyethylthiazole kinase.